The following is a 93-amino-acid chain: Alpha-defensin 9 (93 aa).

The N-terminal stretch at 1-19 is a signal peptide; the sequence is MKTLVLLSALVLLAFQVQA. Positions 20–58 are excised as a propeptide; the sequence is DPIQNTDEETKTEEQPGEEDQAVSVSFGDPEGSSLQEES. A disordered region spans residues 23–56; sequence QNTDEETKTEEQPGEEDQAVSVSFGDPEGSSLQE. 3 disulfide bridges follow: Cys-64-Cys-92, Cys-66-Cys-81, and Cys-71-Cys-91.

The protein belongs to the alpha-defensin family. Paneth cells of the small bowel.

Its subcellular location is the secreted. Its function is as follows. Probably contributes to the antimicrobial barrier function of the small bowel mucosa. In Mus musculus (Mouse), this protein is Alpha-defensin 9 (Defa9).